Reading from the N-terminus, the 428-residue chain is Spliceosome RNA helicase DDX39B (428 aa).

Residues 1-19 (MAENDVDNELLDYEEDEVE) show a composition bias toward acidic residues. The tract at residues 1 to 35 (MAENDVDNELLDYEEDEVENAAGGDGSEAPPKKDV) is disordered. The Q motif signature appears at 45–73 (SGFRDFLLKPELLRAIVDCGFEHPSEVQH). The Helicase ATP-binding domain maps to 76-249 (IPQAILGMDV…RKFMQDPMEI (174 aa)). ATP is bound at residue 89–96 (AKSGMGKT). A DECD box motif is present at residues 196–199 (DECD). The Helicase C-terminal domain occupies 261–422 (GLQQYYVKLK…ELPDEIDISS (162 aa)).

This sequence belongs to the DEAD box helicase family. DECD subfamily. As to quaternary structure, component of the transcription/export (TREX) complex at least composed of ALYREF/THOC4, DDX39B, SARNP/CIP29, CHTOP and the THO subcomplex.

The protein localises to the nucleus. The protein resides in the nucleus speckle. It carries out the reaction ATP + H2O = ADP + phosphate + H(+). Its function is as follows. Involved in nuclear export of spliced and unspliced mRNA. Component of the TREX complex which is thought to couple mRNA transcription, processing and nuclear export, and specifically associates with spliced mRNA and not with unspliced pre-mRNA. The TREX complex is recruited to spliced mRNAs by a transcription-independent mechanism, binds to mRNA upstream of the exon-junction complex (EJC) and is recruited in a splicing- and cap-dependent manner to a region near the 5' end of the mRNA where it functions in mRNA export to the cytoplasm via the TAP/NXF1 pathway. Involved in transcription elongation and genome stability. Functionally, splice factor that is required for the first ATP-dependent step in spliceosome assembly and for the interaction of U2 snRNP with the branchpoint. Has both RNA-stimulated ATP binding/hydrolysis activity and ATP-dependent RNA unwinding activity. Even with the stimulation of RNA, the ATPase activity is weak. Can only hydrolyze ATP but not other NTPs. The RNA stimulation of ATPase activity does not have a strong preference for the sequence and length of the RNA. However, ssRNA stimulates the ATPase activity much more strongly than dsRNA. Can unwind 5' or 3' overhangs or blunt end RNA duplexes in vitro. The ATPase and helicase activities are not influenced by U2AF2; the effect of ALYREF/THOC4 is reported conflictingly. This chain is Spliceosome RNA helicase DDX39B (DDX39B), found in Gallus gallus (Chicken).